We begin with the raw amino-acid sequence, 906 residues long: Aconitate hydratase A (906 aa).

Positions 1–2 are excised as a propeptide; that stretch reads MS. Cys441, Cys507, and Cys510 together coordinate [4Fe-4S] cluster.

This sequence belongs to the aconitase/IPM isomerase family. In terms of assembly, monomer. [4Fe-4S] cluster serves as cofactor.

It carries out the reaction citrate = D-threo-isocitrate. The enzyme catalyses (2S,3R)-3-hydroxybutane-1,2,3-tricarboxylate = 2-methyl-cis-aconitate + H2O. The protein operates within carbohydrate metabolism; tricarboxylic acid cycle; isocitrate from oxaloacetate: step 2/2. It participates in organic acid metabolism; propanoate degradation. Involved in the catabolism of short chain fatty acids (SCFA) via the tricarboxylic acid (TCA)(acetyl degradation route) and probably the 2-methylcitrate cycle I (propionate degradation route). Catalyzes the reversible isomerization of citrate to isocitrate via cis-aconitate. Could catalyze the hydration of 2-methyl-cis-aconitate to yield (2R,3S)-2-methylisocitrate. The apo form of AcnA functions as a RNA-binding regulatory protein. The chain is Aconitate hydratase A (acn) from Deinococcus radiodurans (strain ATCC 13939 / DSM 20539 / JCM 16871 / CCUG 27074 / LMG 4051 / NBRC 15346 / NCIMB 9279 / VKM B-1422 / R1).